Here is a 3165-residue protein sequence, read N- to C-terminus: Protein eyes shut homolog (3165 aa).

Residues 1–21 form the signal peptide; that stretch reads MTDKSIIILSLMVFHSSFING. Asn42, Asn105, Asn117, and Asn166 each carry an N-linked (GlcNAc...) asparagine glycan. EGF-like domains lie at 170–212, 213–254, and 256–292; these read KQQF…KYCQ, ELDA…KNCS, and IIVQ…PFCE. 9 cysteine pairs are disulfide-bonded: Cys174–Cys189, Cys183–Cys200, Cys202–Cys211, Cys217–Cys228, Cys222–Cys242, Cys244–Cys253, Cys260–Cys270, Cys265–Cys280, and Cys282–Cys291. 3 N-linked (GlcNAc...) asparagine glycosylation sites follow: Asn252, Asn269, and Asn272. N-linked (GlcNAc...) asparagine glycans are attached at residues Asn311 and Asn343. EGF-like domains are found at residues 332 to 368 and 370 to 406; these read DVSE…LLCK and FQTS…KNCE. 2 disulfide bridges follow: Cys341/Cys356 and Cys358/Cys367. N-linked (GlcNAc...) asparagine glycosylation is present at Asn382. A disulfide bond links Cys396 and Cys405. 5 N-linked (GlcNAc...) asparagine glycosylation sites follow: Asn506, Asn520, Asn521, Asn566, and Asn573. EGF-like domains are found at residues 566–602, 604–641, and 643–679; these read NITD…RLCV, NVDY…NICE, and DIED…TRCE. Intrachain disulfides connect Cys592–Cys601 and Cys608–Cys620. Residues Asn611 and Asn628 are each glycosylated (N-linked (GlcNAc...) asparagine). The cysteines at positions 629 and 640 are disulfide-linked. A glycan (N-linked (GlcNAc...) asparagine) is linked at Asn654. 4 disulfide bridges follow: Cys669–Cys678, Cys685–Cys696, Cys690–Cys705, and Cys707–Cys719. The EGF-like 9; calcium-binding domain occupies 681 to 720; that stretch reads DLDECALHPCKSGATCIDQPGNYFCQCGPPFKVVDGFSCL. The region spanning 733–769 is the EGF-like 10 domain; that stretch reads NIDNCILNAFEHNSTYKDLHLSYQCVCLSGWEGNFCE. Residue Asn745 is glycosylated (N-linked (GlcNAc...) asparagine). Intrachain disulfides connect Cys759–Cys768, Cys775–Cys786, Cys780–Cys795, Cys797–Cys806, Cys813–Cys824, Cys818–Cys835, Cys837–Cys846, Cys853–Cys866, Cys860–Cys876, Cys878–Cys887, Cys894–Cys905, Cys899–Cys914, Cys916–Cys925, Cys932–Cys943, Cys937–Cys952, Cys954–Cys963, Cys970–Cys981, Cys975–Cys990, Cys992–Cys1001, Cys1008–Cys1019, Cys1013–Cys1028, Cys1030–Cys1039, Cys1046–Cys1056, Cys1051–Cys1065, Cys1067–Cys1076, Cys1083–Cys1094, Cys1088–Cys1103, Cys1105–Cys1114, Cys1121–Cys1137, Cys1131–Cys1147, Cys1149–Cys1158, Cys1165–Cys1176, Cys1170–Cys1185, and Cys1187–Cys1196. Positions 771 to 807 constitute an EGF-like 11; calcium-binding domain; that stretch reads ESNECKMNPCKNNSTCTDLYKSYRCECTSGWTGQNCS. N-linked (GlcNAc...) asparagine glycans are attached at residues Asn782, Asn783, and Asn805. EGF-like domains are found at residues 809–847, 849–888, and 890–926; these read EINE…QFCH, RYNP…KHCE, and DVKE…SLCE. 2 N-linked (GlcNAc...) asparagine glycosylation sites follow: Asn862 and Asn863. The EGF-like 15; calcium-binding domain occupies 928-964; that stretch reads EINECSSEPCKNNGTCVDLTNRFFCNCEPGYHGPFCE. N-linked (GlcNAc...) asparagine glycosylation occurs at Asn940. Positions 966–1002 constitute an EGF-like 16 domain; it reads EVNKCKISPCLDEENCVYRTDRYNCLCAPGYTGINCE. Positions 1004 to 1040 constitute an EGF-like 17; calcium-binding domain; sequence NLDECLSEPCLHDGVCIDGINHYTCDCKSGFFGTHCE. 3 EGF-like domains span residues 1042 to 1077, 1079 to 1115, and 1117 to 1159; these read NAND…IQCK, KIND…AYCE, and SIDN…QFCE. Residues 1161-1197 form the EGF-like 21; calcium-binding domain; that stretch reads NINECSSSPCLHGANCEDHINGYVCKCQPGWSGHHCE. N-linked (GlcNAc...) asparagine glycosylation is found at Asn1509, Asn1906, Asn1941, and Asn2033. Positions 1883–2063 constitute a Laminin G-like 1 domain; sequence FSCVCYYGDS…AVRNYHINNC (181 aa). Intrachain disulfides connect Cys2037/Cys2063, Cys2103/Cys2114, Cys2108/Cys2128, and Cys2130/Cys2139. The 42-residue stretch at 2099–2140 folds into the EGF-like 22 domain; the sequence is APSVCQEDVCHNGGTCRPIFLSSGIVSFQCDCPLHFTGRFCE. A Laminin G-like 2 domain is found at 2145 to 2339; that stretch reads LFFPSFSGNS…NIENCHVPWC (195 aa). N-linked (GlcNAc...) asparagine glycans are attached at residues Asn2170, Asn2185, and Asn2228. 6 disulfide bridges follow: Cys2308/Cys2339, Cys2339/Cys2350, Cys2344/Cys2359, Cys2375/Cys2386, Cys2380/Cys2396, and Cys2398/Cys2407. 2 EGF-like domains span residues 2335 to 2368 and 2371 to 2408; these read HVPW…YSGK and QFAS…PLCT. Residue Asn2347 is glycosylated (N-linked (GlcNAc...) asparagine). 5 N-linked (GlcNAc...) asparagine glycosylation sites follow: Asn2412, Asn2453, Asn2484, Asn2506, and Asn2532. The Laminin G-like 3 domain maps to 2419-2609; that stretch reads SGTDAFGYTS…PNAGRSVGQC (191 aa). Cystine bridges form between Cys2576–Cys2609, Cys2614–Cys2625, and Cys2619–Cys2634. 2 consecutive EGF-like domains span residues 2610-2646 and 2648-2689; these read HASP…AFCT and TVSI…IYCE. An N-linked (GlcNAc...) asparagine glycan is attached at Asn2635. Cystine bridges form between Cys2636/Cys2645, Cys2652/Cys2668, Cys2662/Cys2677, and Cys2679/Cys2688. Positions 2717–2895 constitute a Laminin G-like 4 domain; sequence DPSFRSSELS…AKGGSNVGDC (179 aa). Asn2775, Asn2800, and Asn2824 each carry an N-linked (GlcNAc...) asparagine glycan. 4 cysteine pairs are disulfide-bonded: Cys2868-Cys2895, Cys2900-Cys2911, Cys2905-Cys2920, and Cys2922-Cys2931. 2 EGF-like domains span residues 2896–2932 and 2933–2970; these read DGTA…NICN and QSAY…RYCE. N-linked (GlcNAc...) asparagine glycosylation occurs at Asn2914. An N-linked (GlcNAc...) asparagine glycan is attached at Asn2932. Intrachain disulfides connect Cys2937/Cys2948, Cys2942/Cys2958, and Cys2960/Cys2969. N-linked (GlcNAc...) asparagine glycosylation is found at Asn2971, Asn3006, Asn3036, Asn3057, Asn3073, and Asn3082. Residues 2975–3165 form the Laminin G-like 5 domain; it reads FTTAKFMGNS…YDGDEQNEVT (191 aa).

It belongs to the EYS family. Expressed in retina (at protein level).

Its subcellular location is the cell projection. The protein localises to the cilium. It is found in the photoreceptor outer segment. The protein resides in the cytoplasm. It localises to the cytoskeleton. Its subcellular location is the cilium axoneme. The protein localises to the microtubule organizing center. It is found in the centrosome. The protein resides in the secreted. It localises to the extracellular space. Its subcellular location is the extracellular matrix. The protein localises to the interphotoreceptor matrix. Required to maintain the integrity of photoreceptor cells. Specifically required for normal morphology of the photoreceptor ciliary pocket, and might thus facilitate protein trafficking between the photoreceptor inner and outer segments via the transition zone. The sequence is that of Protein eyes shut homolog from Macaca fascicularis (Crab-eating macaque).